Reading from the N-terminus, the 313-residue chain is NAD-capped RNA hydrolase NudC (313 aa).

Position 111 (Arg111) interacts with substrate. The Nudix hydrolase domain occupies 168–293; the sequence is PRIDPAVICL…DWSSASESKL (126 aa). A divalent metal cation is bound by residues Ala202, Glu218, and Glu222. The Nudix box signature appears at 203-224; sequence GFVEAGESFEVCVAREIREEIG. 236–243 lines the substrate pocket; the sequence is QQWPFPRS. Glu264 contacts a divalent metal cation.

This sequence belongs to the Nudix hydrolase family. NudC subfamily. Homodimer. The cofactor is Mg(2+). Requires Mn(2+) as cofactor.

It carries out the reaction a 5'-end NAD(+)-phospho-ribonucleoside in mRNA + H2O = a 5'-end phospho-adenosine-phospho-ribonucleoside in mRNA + beta-nicotinamide D-ribonucleotide + 2 H(+). It catalyses the reaction NAD(+) + H2O = beta-nicotinamide D-ribonucleotide + AMP + 2 H(+). The catalysed reaction is NADH + H2O = reduced beta-nicotinamide D-ribonucleotide + AMP + 2 H(+). MRNA decapping enzyme that specifically removes the nicotinamide adenine dinucleotide (NAD) cap from a subset of mRNAs by hydrolyzing the diphosphate linkage to produce nicotinamide mononucleotide (NMN) and 5' monophosphate mRNA. The NAD-cap is present at the 5'-end of some mRNAs and stabilizes RNA against 5'-processing. Has preference for mRNAs with a 5'-end purine. Catalyzes the hydrolysis of a broad range of dinucleotide pyrophosphates. This Mycobacterium tuberculosis (strain ATCC 25177 / H37Ra) protein is NAD-capped RNA hydrolase NudC.